We begin with the raw amino-acid sequence, 277 residues long: MLLADTWYPNWWQALILGMVQGITEFLPISSTAHLRVFPALVGWPDAGASFTAVIQLGSLGAVLIYFASDLRQLILGSWKAWRERDFQQEPWRLSVGILVGTVPIVVAGWAIKAIWGSPPRQLWVIATAAIGLAVLLGWAEQTGKRQRDLHSLGIWDGIWVGLAQALSLIPGVSRSGSTLTAGLFLHLQRSAAARYSFLLGIPALFLAGVVEFISEFEAEALLPQGLGTLSAFVFSYLSIDWLIQFLQRSSTWLFIVYRIGFGLFIILGLALGFLRP.

8 helical membrane passes run 11–31 (WWQA…PISS), 47–67 (AGAS…LIYF), 96–116 (VGIL…KAIW), 123–143 (LWVI…AEQT), 153–173 (LGIW…IPGV), 197–217 (SFLL…ISEF), 227–247 (LGTL…IQFL), and 254–274 (LFIV…ALGF).

It belongs to the UppP family.

It is found in the cell inner membrane. The enzyme catalyses di-trans,octa-cis-undecaprenyl diphosphate + H2O = di-trans,octa-cis-undecaprenyl phosphate + phosphate + H(+). Its function is as follows. Catalyzes the dephosphorylation of undecaprenyl diphosphate (UPP). Confers resistance to bacitracin. The polypeptide is Undecaprenyl-diphosphatase (Synechococcus sp. (strain JA-2-3B'a(2-13)) (Cyanobacteria bacterium Yellowstone B-Prime)).